The following is a 378-amino-acid chain: O-glycoside alpha-1,2-mannosyltransferase homolog 3 (378 aa).

Topologically, residues 1–6 are cytoplasmic; it reads MGIPKS. The helical; Signal-anchor for type II membrane protein transmembrane segment at 7–24 threads the bilayer; sequence SIYFCILLFCIISFYLQS. Topologically, residues 25 to 378 are lumenal; it reads SKDGPKELKV…AIKWLENINS (354 aa). Residue Glu-276 is the Nucleophile of the active site.

It belongs to the glycosyltransferase 15 family.

The protein localises to the endoplasmic reticulum membrane. It localises to the golgi apparatus membrane. Probable mannosyltransferase involved in O-glycosylation of cell wall and secreted proteins. This Schizosaccharomyces pombe (strain 972 / ATCC 24843) (Fission yeast) protein is O-glycoside alpha-1,2-mannosyltransferase homolog 3 (omh3).